A 542-amino-acid polypeptide reads, in one-letter code: Heterogeneous nuclear ribonucleoprotein L-like (542 aa).

Residues 1–71 (MSSSSSSPRE…QPEAGGSHHK (71 aa)) are disordered. Residues 18–29 (YESQAKRLKTEE) are compositionally biased toward basic and acidic residues. A Glycyl lysine isopeptide (Lys-Gly) (interchain with G-Cter in SUMO2) cross-link involves residue Lys26. Ser35 is subject to Phosphoserine. Thr46 carries the phosphothreonine modification. Over residues 48–58 (RGGGDGGGGGR) the composition is skewed to gly residues. Phosphoserine occurs at positions 59, 68, and 75. 3 consecutive RRM domains span residues 76-150 (PVVH…YSTS), 166-244 (NKVL…YARP), and 335-409 (SVVM…VSKQ). Lys491 participates in a covalent cross-link: Glycyl lysine isopeptide (Lys-Gly) (interchain with G-Cter in SUMO2).

Interacts with HNRNPL. In terms of tissue distribution, widely expressed. Detected in bone marrow stroma cells, skeletal muscle, heart, placenta, pancreas, kidney and lung.

Functionally, RNA-binding protein that functions as a regulator of alternative splicing for multiple target mRNAs, including PTPRC/CD45 and STAT5A. Required for alternative splicing of PTPRC. The polypeptide is Heterogeneous nuclear ribonucleoprotein L-like (HNRNPLL) (Homo sapiens (Human)).